The sequence spans 440 residues: 5-hydroxytryptamine receptor 6 (440 aa).

Topologically, residues 1-27 are extracellular; the sequence is MVPEPGPTANSTPAWGAGPPSAPGGSG. Residues 28–52 traverse the membrane as a helical segment; the sequence is WVAAALCVVIALTAAANSLLIALIC. Topologically, residues 53 to 62 are cytoplasmic; that stretch reads TQPALRNTSN. A helical membrane pass occupies residues 63 to 88; sequence FFLVSLFTSDLMVGLVVMPPAMLNAL. Topologically, residues 89 to 96 are extracellular; sequence YGRWVLAR. Residues 97 to 122 traverse the membrane as a helical segment; it reads GLCLLWTAFDVMCCSASILNLCLISL. Residues cysteine 99 and cysteine 180 are joined by a disulfide bond. A serotonin-binding site is contributed by aspartate 106. Topologically, residues 123-142 are cytoplasmic; the sequence is DRYLLILSPLRYKLRMTPLR. Residues 143–167 form a helical membrane-spanning segment; the sequence is ALALVLGAWSLAALASFLPLLLGWH. The Extracellular portion of the chain corresponds to 168-185; it reads ELGHARPPVPGQCRLLAS. A helical transmembrane segment spans residues 186–209; that stretch reads LPFVLVASGLTFFLPSGAICFTYC. The Cytoplasmic segment spans residues 210 to 266; it reads RILLAARKQAVQVASLTTGMASQASETLQVPRTPRPGVESADSRRLATKHSRKALKA. A helical membrane pass occupies residues 267–293; that stretch reads SLTLGILLGMFFVTWLPFFVANIVQAV. Asparagine 288 provides a ligand contact to serotonin. Residues 294–299 are Extracellular-facing; sequence CDCISP. A helical transmembrane segment spans residues 300–323; sequence GLFDVLTWLGYCNSTMNPIIYPLF. The Cytoplasmic portion of the chain corresponds to 324 to 440; sequence MRDFKRALGR…RPHPLGIPTN (117 aa). A disordered region spans residues 346–392; it reads ASLASPSLRTSHSGPRPGLSLQQVLPLPLPPDSDSDSDAGSGGSSGL. Residues 347–358 are compositionally biased toward polar residues; the sequence is SLASPSLRTSHS. A compositionally biased stretch (low complexity) spans 362-371; sequence PGLSLQQVLP.

This sequence belongs to the G-protein coupled receptor 1 family. In terms of assembly, interacts with MTOR, RPTOR and NF1. Interacts with CDK5. As to expression, expressed in several human brain regions, most prominently in the caudate nucleus.

The protein resides in the cell membrane. Its function is as follows. G-protein coupled receptor for 5-hydroxytryptamine (serotonin), a biogenic hormone that functions as a neurotransmitter, a hormone and a mitogen. Also has a high affinity for tricyclic psychotropic drugs. Ligand binding causes a conformation change that triggers signaling via guanine nucleotide-binding proteins (G proteins) and modulates the activity of downstream effectors. HTR6 is coupled to G(s) G alpha proteins and mediates activation of adenylate cyclase activity. Controls pyramidal neurons migration during corticogenesis, through the regulation of CDK5 activity. Is an activator of mTOR signaling. The protein is 5-hydroxytryptamine receptor 6 of Homo sapiens (Human).